A 196-amino-acid chain; its full sequence is Ribosome maturation factor RimP (196 aa).

Residues 163–196 (GLAPSKPTGPAPKRPKPKTNSSSNEPAAKKPRAE) are disordered.

This sequence belongs to the RimP family.

The protein localises to the cytoplasm. Required for maturation of 30S ribosomal subunits. This is Ribosome maturation factor RimP from Stenotrophomonas maltophilia (strain R551-3).